The chain runs to 305 residues: UDP-3-O-acyl-N-acetylglucosamine deacetylase (305 aa).

The Zn(2+) site is built by H79, H238, and D242. H265 serves as the catalytic Proton donor.

It belongs to the LpxC family. It depends on Zn(2+) as a cofactor.

The catalysed reaction is a UDP-3-O-[(3R)-3-hydroxyacyl]-N-acetyl-alpha-D-glucosamine + H2O = a UDP-3-O-[(3R)-3-hydroxyacyl]-alpha-D-glucosamine + acetate. It functions in the pathway glycolipid biosynthesis; lipid IV(A) biosynthesis; lipid IV(A) from (3R)-3-hydroxytetradecanoyl-[acyl-carrier-protein] and UDP-N-acetyl-alpha-D-glucosamine: step 2/6. Functionally, catalyzes the hydrolysis of UDP-3-O-myristoyl-N-acetylglucosamine to form UDP-3-O-myristoylglucosamine and acetate, the committed step in lipid A biosynthesis. This is UDP-3-O-acyl-N-acetylglucosamine deacetylase from Shigella dysenteriae serotype 1 (strain Sd197).